The sequence spans 191 residues: Succinoglycan biosynthesis protein ExoI (191 aa).

A disordered region spans residues 1–21 (MTRIKSAVAAGGRRAPHSARL).

It participates in glycan metabolism; exopolysaccharide biosynthesis. The protein is Succinoglycan biosynthesis protein ExoI (exoI) of Rhizobium meliloti (strain 1021) (Ensifer meliloti).